Consider the following 138-residue polypeptide: Acidic phospholipase A2 CH-E6' (138 aa).

The first 16 residues, 1 to 16 (MRTLWIVAVLLLGVEG), serve as a signal peptide directing secretion. Cystine bridges form between C42-C131, C44-C60, C59-C111, C65-C138, C66-C104, C73-C97, and C91-C102. The Ca(2+) site is built by Y43, G45, and G47. Residue H63 is part of the active site. D64 is a binding site for Ca(2+). D105 is a catalytic residue.

It belongs to the phospholipase A2 family. Group II subfamily. D49 sub-subfamily. Ca(2+) is required as a cofactor. In terms of tissue distribution, expressed by the venom gland.

It localises to the secreted. The catalysed reaction is a 1,2-diacyl-sn-glycero-3-phosphocholine + H2O = a 1-acyl-sn-glycero-3-phosphocholine + a fatty acid + H(+). Functionally, snake venom phospholipase A2 (PLA2) that shows high lipolytic and weak ADP-induced platelet aggregation activities. Also shows weak anticoagulant activity. PLA2 catalyzes the calcium-dependent hydrolysis of the 2-acyl groups in 3-sn-phosphoglycerides. The polypeptide is Acidic phospholipase A2 CH-E6' (Crotalus horridus (Timber rattlesnake)).